Here is a 415-residue protein sequence, read N- to C-terminus: Fructose-like permease IIC component (415 aa).

Topologically, residues 1–46 (MAIKKRSATVVPGASGAAAAVKNPQASKSSFWGELPQHVMSGISRM) are cytoplasmic. Residues 35–410 (LPQHVMSGIS…RLMMFRKGKL (376 aa)) form the PTS EIIC type-2 domain. Residues 47 to 67 (VPTLIMGGVILAFSQLIAYSW) form a helical membrane-spanning segment. Residues 68–101 (LKIPAEIGIMDALNSGKFSGFDLSLLKFAWLSQS) lie on the Periplasmic side of the membrane. The helical transmembrane segment at 102–122 (FGGVLFGFAIPMFAAFVANSI) threads the bilayer. Residues 123 to 126 (GGKL) are Cytoplasmic-facing. The chain crosses the membrane as a helical span at residues 127–147 (AFPAGFIGGLMSTQPTQLLNF). The Periplasmic portion of the chain corresponds to 148–157 (DPSTMQWATS). Residues 158-178 (SPVPSTFIGALIISIVAGYLV) traverse the membrane as a helical segment. Topologically, residues 179 to 197 (KWMNQKIQLPDFLLAFKTT) are cytoplasmic. The helical transmembrane segment at 198 to 218 (FLLPILSAIFVMLAMYYVITP) threads the bilayer. The Periplasmic portion of the chain corresponds to 219–237 (FGGWINGGIRTVLTAAGEK). A helical transmembrane segment spans residues 238–258 (GALMYAMGIAAATAIDLGGPI). At 259–276 (NKAAGFVAFSFTTDHVLP) the chain is on the cytoplasmic side. The helical transmembrane segment at 277-297 (VTARSIAIVIPPIGLGLATII) threads the bilayer. Residues 298 to 318 (DRRLTGKRLFNAQLYPQGKTA) lie on the Periplasmic side of the membrane. A helical transmembrane segment spans residues 319 to 339 (MFLAFMGISEGAIPFALESPI). At 340–341 (TA) the chain is on the cytoplasmic side. The chain crosses the membrane as a helical span at residues 342–362 (IPSYMVGAIVGSTAAVWLGAV). Residues 363–378 (QWFPESAIWAWPLVTN) lie on the Periplasmic side of the membrane. Residues 379-399 (LGVYMAGIALGAVITALMVVF) form a helical membrane-spanning segment. The Cytoplasmic portion of the chain corresponds to 400 to 415 (LRLMMFRKGKLLIDSL).

Its subcellular location is the cell inner membrane. Its function is as follows. The phosphoenolpyruvate-dependent sugar phosphotransferase system (PTS), a major carbohydrate active -transport system, catalyzes the phosphorylation of incoming sugar substrates concomitant with their translocation across the cell membrane. In Escherichia coli O157:H7, this protein is Fructose-like permease IIC component (fryC).